We begin with the raw amino-acid sequence, 1407 residues long: Metabotropic glutamate receptor-like protein P (1407 aa).

Over 1–696 (MKFKKKNIYW…KTIKVTSFVK (696 aa)) the chain is Extracellular. Asn-43 and Asn-58 each carry an N-linked (GlcNAc...) asparagine glycan. PbH1 repeat units follow at residues 93-118 (ISDI…FDGG) and 129-150 (FVNV…FLYN). Asn-162, Asn-179, Asn-182, Asn-230, Asn-241, Asn-270, Asn-368, Asn-391, Asn-464, Asn-512, Asn-539, Asn-544, Asn-554, Asn-571, Asn-627, and Asn-646 each carry an N-linked (GlcNAc...) asparagine glycan. The PbH1 3 repeat unit spans residues 254 to 279 (ISNVIFESCEFIGNRANSTGGLSFLT). The PbH1 4 repeat unit spans residues 452–476 (GYSVYIENCEVKNNTGLFKGCFIDT). The chain crosses the membrane as a helical span at residues 697-717 (FLVGTLAAILLIILIISGFIS). Residues 718-731 (LKYRKKRVIRYSNP) are Cytoplasmic-facing. Residues 732–752 (LFLCIILVGCIIFLITIPVLF) traverse the membrane as a helical segment. Topologically, residues 753–758 (GSTSAT) are extracellular. A helical transmembrane segment spans residues 759–779 (CKIRFPIIVIGSCLVTSSVFI). The Cytoplasmic segment spans residues 780–806 (KQFRIWRLIKDIQLLRETNVENKYLLK). The helical transmembrane segment at 807–827 (FISILMVIPIIIVICSFFIFP) threads the bilayer. The Extracellular portion of the chain corresponds to 828–853 (THEKYTFNQRDITITHYCSDGSYLAY). A helical transmembrane segment spans residues 854–874 (VIIFLVYQMAILLFGCYLVIV). At 875–890 (CRKFRSIPGTFNEATY) the chain is on the cytoplasmic side. The chain crosses the membrane as a helical span at residues 891-911 (IGILIYNYTVVLIVAIPLAYV). Over 912–919 (FNKNPLAN) the chain is Extracellular. The chain crosses the membrane as a helical span at residues 920 to 940 (FLIFSISIIVFVLSTIILLFI). Topologically, residues 941-1407 (PKFHFLLRKK…LSPINLSKRK (467 aa)) are cytoplasmic. Over residues 991 to 1004 (QQRQGNLYNNNSLG) the composition is skewed to polar residues. 4 disordered regions span residues 991 to 1072 (QQRQ…DPNF), 1084 to 1248 (GKRK…SSIG), 1267 to 1351 (KKVK…NFNE), and 1369 to 1407 (FHQK…SKRK). A compositionally biased stretch (low complexity) spans 1005–1029 (RSISSNTRKRSNNNINNNNNNNSFN). Residues 1030 to 1040 (MTGFSDSSSTI) show a composition bias toward polar residues. Residues 1041-1071 (SNPNLTSFTSSPSSLNSSSDSDSTPDFNDPN) show a composition bias toward low complexity. Residues 1084 to 1093 (GKRKSIEKNK) are compositionally biased toward basic and acidic residues. Low complexity-rich tracts occupy residues 1099-1147 (PNSP…NTPI), 1154-1246 (SSKT…SDSS), and 1276-1339 (SDST…NNNN). A coiled-coil region spans residues 1315-1344 (NNNNNNNNNNNNNINNNNNNANNNNSDTDD).

It belongs to the G-protein coupled receptor 3 family. GABA-B receptor subfamily.

Its subcellular location is the membrane. The chain is Metabotropic glutamate receptor-like protein P (grlP) from Dictyostelium discoideum (Social amoeba).